A 179-amino-acid polypeptide reads, in one-letter code: ATP synthase subunit delta (179 aa).

It belongs to the ATPase delta chain family. In terms of assembly, F-type ATPases have 2 components, F(1) - the catalytic core - and F(0) - the membrane proton channel. F(1) has five subunits: alpha(3), beta(3), gamma(1), delta(1), epsilon(1). F(0) has three main subunits: a(1), b(2) and c(10-14). The alpha and beta chains form an alternating ring which encloses part of the gamma chain. F(1) is attached to F(0) by a central stalk formed by the gamma and epsilon chains, while a peripheral stalk is formed by the delta and b chains.

The protein resides in the cell inner membrane. In terms of biological role, f(1)F(0) ATP synthase produces ATP from ADP in the presence of a proton or sodium gradient. F-type ATPases consist of two structural domains, F(1) containing the extramembraneous catalytic core and F(0) containing the membrane proton channel, linked together by a central stalk and a peripheral stalk. During catalysis, ATP synthesis in the catalytic domain of F(1) is coupled via a rotary mechanism of the central stalk subunits to proton translocation. This protein is part of the stalk that links CF(0) to CF(1). It either transmits conformational changes from CF(0) to CF(1) or is implicated in proton conduction. The protein is ATP synthase subunit delta of Acidithiobacillus ferridurans.